The sequence spans 139 residues: S-adenosylmethionine decarboxylase proenzyme (139 aa).

Serine 63 serves as the catalytic Schiff-base intermediate with substrate; via pyruvic acid. Residue serine 63 is modified to Pyruvic acid (Ser); by autocatalysis. Residue histidine 68 is the Proton acceptor; for processing activity of the active site. Catalysis depends on cysteine 83, which acts as the Proton donor; for catalytic activity.

It belongs to the prokaryotic AdoMetDC family. Type 1 subfamily. In terms of assembly, heterotetramer of two alpha and two beta chains arranged as a dimer of alpha/beta heterodimers. Pyruvate is required as a cofactor. Is synthesized initially as an inactive proenzyme. Formation of the active enzyme involves a self-maturation process in which the active site pyruvoyl group is generated from an internal serine residue via an autocatalytic post-translational modification. Two non-identical subunits are generated from the proenzyme in this reaction, and the pyruvate is formed at the N-terminus of the alpha chain, which is derived from the carboxyl end of the proenzyme. The post-translation cleavage follows an unusual pathway, termed non-hydrolytic serinolysis, in which the side chain hydroxyl group of the serine supplies its oxygen atom to form the C-terminus of the beta chain, while the remainder of the serine residue undergoes an oxidative deamination to produce ammonia and the pyruvoyl group blocking the N-terminus of the alpha chain.

It carries out the reaction S-adenosyl-L-methionine + H(+) = S-adenosyl 3-(methylsulfanyl)propylamine + CO2. It participates in amine and polyamine biosynthesis; S-adenosylmethioninamine biosynthesis; S-adenosylmethioninamine from S-adenosyl-L-methionine: step 1/1. In terms of biological role, catalyzes the decarboxylation of S-adenosylmethionine to S-adenosylmethioninamine (dcAdoMet), the propylamine donor required for the synthesis of the polyamines spermine and spermidine from the diamine putrescine. In Pyrococcus furiosus (strain ATCC 43587 / DSM 3638 / JCM 8422 / Vc1), this protein is S-adenosylmethionine decarboxylase proenzyme.